Here is a 360-residue protein sequence, read N- to C-terminus: F420-dependent hydroxymycolic acid dehydrogenase (360 aa).

The segment at residues 1 to 40 is a signal peptide (tat-type signal); the sequence is MTGISRRTFGLAAGFGAIGAGGLGGGCSTRSGPTPTPEPA. D77 contacts coenzyme F420-(gamma-Glu)n. H78 functions as the Proton donor in the catalytic mechanism. 145 to 146 lines the coenzyme F420-(gamma-Glu)n pocket; it reads TG. E147 acts as the Proton acceptor in catalysis. Coenzyme F420-(gamma-Glu)n-binding positions include N150 and 213–214; that span reads SG.

It belongs to the F420-dependent hydroxymycolic acid dehydrogenase family. In terms of assembly, homodimer. In terms of processing, is exported by the Tat system. The position of the signal peptide cleavage has not been experimentally proven. May be lipidated.

It localises to the cell envelope. The protein operates within lipid metabolism; mycolic acid biosynthesis. With respect to regulation, is inhibited by the anti-tuberculous drug PA-824, a bicyclic 4-nitroimidazole class compound. Therefore, this is consistent with the finding that PA-824 inhibits the formation of K-MAs and causes an accumulation of hydroxymycolic acids (H-MAs) in M.tuberculosis. In terms of biological role, catalyzes the coenzyme F420-dependent oxidation of hydroxymycolic acids (H-MAs) to ketomycolic acids (K-MAs), a lipid class making up the mycobacterial pseudo-outer membrane and over one-third of the dry weight of M.tuberculosis. Does not exhibit F420-dependent glucose-6-phosphate dehydrogenase (FGD) activity. This Mycobacterium tuberculosis (strain ATCC 25618 / H37Rv) protein is F420-dependent hydroxymycolic acid dehydrogenase.